The chain runs to 382 residues: Phosphatidylglycerol--prolipoprotein diacylglyceryl transferase (382 aa).

Helical transmembrane passes span 18–38, 53–73, and 91–111; these read IQWY…MFVF, FFIF…SFVI, and LAIQ…FNFF. Arginine 162 contacts a 1,2-diacyl-sn-glycero-3-phospho-(1'-sn-glycerol). The next 4 membrane-spanning stretches (helical) occupy residues 213-233, 243-263, 274-294, and 302-322; these read IPLF…IYFV, GTIG…LENF, ITTS…CQFI, and FWTY…TTLF.

This sequence belongs to the Lgt family.

The protein localises to the cell membrane. The enzyme catalyses L-cysteinyl-[prolipoprotein] + a 1,2-diacyl-sn-glycero-3-phospho-(1'-sn-glycerol) = an S-1,2-diacyl-sn-glyceryl-L-cysteinyl-[prolipoprotein] + sn-glycerol 1-phosphate + H(+). It participates in protein modification; lipoprotein biosynthesis (diacylglyceryl transfer). Functionally, catalyzes the transfer of the diacylglyceryl group from phosphatidylglycerol to the sulfhydryl group of the N-terminal cysteine of a prolipoprotein, the first step in the formation of mature lipoproteins. In Mycoplasma genitalium (strain ATCC 33530 / DSM 19775 / NCTC 10195 / G37) (Mycoplasmoides genitalium), this protein is Phosphatidylglycerol--prolipoprotein diacylglyceryl transferase.